Reading from the N-terminus, the 151-residue chain is MQIWVDADACPNVIKDVLFRVADRLQVQVTLVANKLLRTPPSRFIKAIQVPAGFDVADNEIVRLVQAGDLVITADIPLAADVLEKGGHPLNPRGEFYTKDNIQQHLTMRSFMDDLRSSGVDTGGPSAFSQGDIRAFANQLDRYLARQRSKG.

The protein belongs to the UPF0178 family.

The protein is UPF0178 protein mma_0312 of Janthinobacterium sp. (strain Marseille) (Minibacterium massiliensis).